The primary structure comprises 160 residues: Ribosomal RNA large subunit methyltransferase H (160 aa).

The disordered stretch occupies residues 44-63 (LPESRASNSATRKREEAVQI). S-adenosyl-L-methionine-binding positions include Leu-76, Gly-108, and 127 to 132 (LGKMTW).

The protein belongs to the RNA methyltransferase RlmH family. In terms of assembly, homodimer.

Its subcellular location is the cytoplasm. It carries out the reaction pseudouridine(1915) in 23S rRNA + S-adenosyl-L-methionine = N(3)-methylpseudouridine(1915) in 23S rRNA + S-adenosyl-L-homocysteine + H(+). Its function is as follows. Specifically methylates the pseudouridine at position 1915 (m3Psi1915) in 23S rRNA. The protein is Ribosomal RNA large subunit methyltransferase H of Allorhizobium ampelinum (strain ATCC BAA-846 / DSM 112012 / S4) (Agrobacterium vitis (strain S4)).